A 407-amino-acid chain; its full sequence is 1-deoxy-D-xylulose 5-phosphate reductoisomerase (407 aa).

NADPH contacts are provided by T10, G11, S12, I13, G36, and N131. Residue K132 coordinates 1-deoxy-D-xylulose 5-phosphate. An NADPH-binding site is contributed by E133. Residue D155 coordinates Mn(2+). 1-deoxy-D-xylulose 5-phosphate-binding residues include S156, E157, S181, and H204. A Mn(2+)-binding site is contributed by E157. Residue G210 coordinates NADPH. Residues S217, N222, K223, and E226 each coordinate 1-deoxy-D-xylulose 5-phosphate. Mn(2+) is bound at residue E226.

The protein belongs to the DXR family. It depends on Mg(2+) as a cofactor. Mn(2+) is required as a cofactor.

It carries out the reaction 2-C-methyl-D-erythritol 4-phosphate + NADP(+) = 1-deoxy-D-xylulose 5-phosphate + NADPH + H(+). The protein operates within isoprenoid biosynthesis; isopentenyl diphosphate biosynthesis via DXP pathway; isopentenyl diphosphate from 1-deoxy-D-xylulose 5-phosphate: step 1/6. In terms of biological role, catalyzes the NADPH-dependent rearrangement and reduction of 1-deoxy-D-xylulose-5-phosphate (DXP) to 2-C-methyl-D-erythritol 4-phosphate (MEP). The polypeptide is 1-deoxy-D-xylulose 5-phosphate reductoisomerase (Cutibacterium acnes (strain DSM 16379 / KPA171202) (Propionibacterium acnes)).